Reading from the N-terminus, the 833-residue chain is A disintegrin and metalloproteinase with thrombospondin motifs 4 (833 aa).

A signal peptide spans 1–49 (MSQMGLHPRRGLTGHWLQRFQPCLPLHTVQWRRLLLLAFLLSLAWPASP). Residues 50–208 (LPREEEIVFP…PSPISRRTKR (159 aa)) constitute a propeptide that is removed on maturation. The N-linked (GlcNAc...) asparagine glycan is linked to N63. The interval 180–204 (KSPASSQGPMCTVKAPSGSPSPISR) is disordered. The Cysteine switch motif lies at 188–195 (PMCTVKAP). Residue C190 participates in Zn(2+) binding. The Peptidase M12B domain occupies 214–424 (RFVETLVVAD…GYGHCLLDKP (211 aa)). Disulfide bonds link C289-C341, C318-C323, C335-C419, C373-C403, C445-C468, C456-C478, C463-C497, C491-C502, C528-C565, C532-C570, and C543-C555. The N-linked (GlcNAc...) asparagine glycan is linked to N299. H357 lines the Zn(2+) pocket. E358 is a catalytic residue. H361 and H367 together coordinate Zn(2+). Residues 433–515 (TFPGKDYDAD…DQLKDFNVPQ (83 aa)) enclose the Disintegrin domain. One can recognise a TSP type-1 domain in the interval 516–571 (AGGWGPWGPWGDCSRTCGGGVQFSSRDCTRPVPRNGGKYCEGRRTRFRSCNTENCP). The interval 682–833 (SKQSGSFKKF…LRKRPWAGRK (152 aa)) is spacer.

In terms of assembly, interacts with SRPX2. Requires Zn(2+) as cofactor. The precursor is cleaved by a furin endopeptidase. In terms of processing, glycosylated. Can be O-fucosylated by POFUT2 on a serine or a threonine residue found within the consensus sequence C1-X(2)-(S/T)-C2-G of the TSP type-1 repeat domains where C1 and C2 are the first and second cysteine residue of the repeat, respectively. Fucosylated repeats can then be further glycosylated by the addition of a beta-1,3-glucose residue by the glucosyltransferase, B3GALTL. Fucosylation mediates the efficient secretion of ADAMTS family members. Can also be C-glycosylated with one or two mannose molecules on tryptophan residues within the consensus sequence W-X-X-W of the TPRs, and N-glycosylated. These other glycosylations can also facilitate secretion.

The protein resides in the secreted. The protein localises to the extracellular space. It localises to the extracellular matrix. The enzyme catalyses Glutamyl endopeptidase. Bonds cleaved include 370-Thr-Glu-Gly-Glu-|-Ala-Arg-Gly-Ser-377 in the interglobular domain of mammalian aggrecan.. Functionally, cleaves aggrecan, a cartilage proteoglycan, at the '392-Glu-|-Ala-393' site and may be involved in its turnover. Also cleaves COMP. May play an important role in the destruction of aggrecan in arthritic diseases. This chain is A disintegrin and metalloproteinase with thrombospondin motifs 4 (Adamts4), found in Mus musculus (Mouse).